A 292-amino-acid chain; its full sequence is Protein-L-isoaspartate O-methyltransferase (292 aa).

The segment at 1 to 76 (MTEKKRFPLS…AAAPSSNERA (76 aa)) is disordered. The span at 28–48 (NRSSTSGKVATPQTATQNASQ) shows a compositional bias: polar residues. Residue Ser138 is part of the active site.

It belongs to the methyltransferase superfamily. L-isoaspartyl/D-aspartyl protein methyltransferase family.

The protein resides in the cytoplasm. It catalyses the reaction [protein]-L-isoaspartate + S-adenosyl-L-methionine = [protein]-L-isoaspartate alpha-methyl ester + S-adenosyl-L-homocysteine. Its function is as follows. Catalyzes the methyl esterification of L-isoaspartyl residues in peptides and proteins that result from spontaneous decomposition of normal L-aspartyl and L-asparaginyl residues. It plays a role in the repair and/or degradation of damaged proteins. The protein is Protein-L-isoaspartate O-methyltransferase of Janthinobacterium sp. (strain Marseille) (Minibacterium massiliensis).